Here is a 391-residue protein sequence, read N- to C-terminus: Multidrug resistance protein MdtL (391 aa).

Topologically, residues 1–3 are cytoplasmic; the sequence is MSR. Residues 4–24 form a helical membrane-spanning segment; that stretch reads FLICSFALVLLYPAGIDMYLV. The Periplasmic portion of the chain corresponds to 25–41; sequence GLPRIAADLNASEAQLH. The helical transmembrane segment at 42–62 threads the bilayer; the sequence is IAFSVYLAGMAAAMLFAGKVA. The Cytoplasmic segment spans residues 63–68; sequence DRSGRK. A helical transmembrane segment spans residues 69-89; it reads PVAIPGAALFIIASVFCSLAE. Over 90 to 92 the chain is Periplasmic; that stretch reads TST. A helical membrane pass occupies residues 93–113; that stretch reads LFLAGRFLQGLGAGCCYVVAF. At 114-130 the chain is on the cytoplasmic side; the sequence is AILRDTLDDRRRAKVLS. The helical transmembrane segment at 131-151 threads the bilayer; the sequence is LLNGITCIIPVLAPVLGHLIM. The Periplasmic segment spans residues 152-157; sequence LKFPWQ. A helical transmembrane segment spans residues 158–178; the sequence is SLFWTMAIMGIAVLMLSLFIL. Over 179–198 the chain is Cytoplasmic; the sequence is KETRPAAPAASDKSRENSES. The chain crosses the membrane as a helical span at residues 199–221; it reads LLNRFFLSRVVITTLSVSVILTF. Topologically, residues 222–244 are periplasmic; that stretch reads VNTSPVLLMEIMGFERGEYATIM. Residues 245–265 traverse the membrane as a helical segment; sequence ALTAGVSMTVSFSTPFALGIF. The Cytoplasmic portion of the chain corresponds to 266–268; that stretch reads KPR. A helical transmembrane segment spans residues 269–289; that stretch reads TLMITSQVLFLAAGITLAVSP. Over 290 to 292 the chain is Periplasmic; that stretch reads SHA. A helical membrane pass occupies residues 293-313; the sequence is ISLFGITLICAGFSVGFGVAM. At 314–330 the chain is on the cytoplasmic side; that stretch reads SQALGPFSLRAGVASST. A helical membrane pass occupies residues 331–351; the sequence is LGIAQVCGSSLWIWLAAVVGI. Over 352–355 the chain is Periplasmic; that stretch reads GAWN. The helical transmembrane segment at 356–376 threads the bilayer; it reads MLIGILIACSIVSLLLIMFVA. At 377-391 the chain is on the cytoplasmic side; the sequence is PGRPVAAHEEIHHHA.

This sequence belongs to the major facilitator superfamily. DHA1 family. MdtL (TC 2.A.1.2.22) subfamily.

The protein localises to the cell inner membrane. This Shigella dysenteriae serotype 1 (strain Sd197) protein is Multidrug resistance protein MdtL.